The sequence spans 159 residues: ATP synthase subunit b (159 aa).

The chain crosses the membrane as a helical span at residues 2–22; it reads NISIPQIIAAILNFIILLLIV.

It belongs to the ATPase B chain family. In terms of assembly, F-type ATPases have 2 components, F(1) - the catalytic core - and F(0) - the membrane proton channel. F(1) has five subunits: alpha(3), beta(3), gamma(1), delta(1), epsilon(1). F(0) has three main subunits: a(1), b(2) and c(10-14). The alpha and beta chains form an alternating ring which encloses part of the gamma chain. F(1) is attached to F(0) by a central stalk formed by the gamma and epsilon chains, while a peripheral stalk is formed by the delta and b chains.

It is found in the cell membrane. F(1)F(0) ATP synthase produces ATP from ADP in the presence of a proton or sodium gradient. F-type ATPases consist of two structural domains, F(1) containing the extramembraneous catalytic core and F(0) containing the membrane proton channel, linked together by a central stalk and a peripheral stalk. During catalysis, ATP synthesis in the catalytic domain of F(1) is coupled via a rotary mechanism of the central stalk subunits to proton translocation. In terms of biological role, component of the F(0) channel, it forms part of the peripheral stalk, linking F(1) to F(0). The polypeptide is ATP synthase subunit b (Clostridium botulinum (strain Loch Maree / Type A3)).